A 798-amino-acid polypeptide reads, in one-letter code: Phenylalanine--tRNA ligase beta subunit (798 aa).

In terms of domain architecture, tRNA-binding spans 38–148 (IGNYEKVVVG…PEAPVGEKIE (111 aa)). Residues 400–475 (FTPKVIAVSL…RYLGYNNFPD (76 aa)) form the B5 domain. Residues Asp453, Asp459, Glu462, and Glu463 each coordinate Mg(2+). The FDX-ACB domain occupies 703-796 (SPYPEVKRDI…LEAKTGAKLR (94 aa)).

The protein belongs to the phenylalanyl-tRNA synthetase beta subunit family. Type 1 subfamily. As to quaternary structure, tetramer of two alpha and two beta subunits. Requires Mg(2+) as cofactor.

The protein resides in the cytoplasm. It carries out the reaction tRNA(Phe) + L-phenylalanine + ATP = L-phenylalanyl-tRNA(Phe) + AMP + diphosphate + H(+). In Carboxydothermus hydrogenoformans (strain ATCC BAA-161 / DSM 6008 / Z-2901), this protein is Phenylalanine--tRNA ligase beta subunit.